The sequence spans 414 residues: Glycogen synthase (414 aa).

This sequence belongs to the glycosyltransferase group 1 family.

The enzyme catalyses [(1-&gt;4)-alpha-D-glucosyl](n) + UDP-alpha-D-glucose = [(1-&gt;4)-alpha-D-glucosyl](n+1) + UDP + H(+). The protein operates within glycan biosynthesis; glycogen biosynthesis. Its function is as follows. Glucosyltransferase that uses UDP-glucose as the sugar donor to elongate alpha-(1-&gt;4)-glucans. Is involved in the biosynthesis of both 6-O-methylglucosyl lipopolysaccharides (MGLP) and glycogen. May also use ADP-glucose as substrate. The chain is Glycogen synthase from Mycobacterium tuberculosis (strain CDC 1551 / Oshkosh).